Reading from the N-terminus, the 285-residue chain is 2-dehydro-3-deoxyphosphooctonate aldolase (285 aa).

Belongs to the KdsA family.

It localises to the cytoplasm. The enzyme catalyses D-arabinose 5-phosphate + phosphoenolpyruvate + H2O = 3-deoxy-alpha-D-manno-2-octulosonate-8-phosphate + phosphate. Its pathway is carbohydrate biosynthesis; 3-deoxy-D-manno-octulosonate biosynthesis; 3-deoxy-D-manno-octulosonate from D-ribulose 5-phosphate: step 2/3. It participates in bacterial outer membrane biogenesis; lipopolysaccharide biosynthesis. This is 2-dehydro-3-deoxyphosphooctonate aldolase from Acinetobacter baumannii (strain AB307-0294).